Consider the following 178-residue polypeptide: Cytochrome b6-f complex iron-sulfur subunit (178 aa).

Residues 20–42 (LLTFGTATGVALGALYPVANYFM) form a helical membrane-spanning segment. Residues 65 to 161 (KTGWLATHQA…VDIEDDAVLV (97 aa)) enclose the Rieske domain. Residues cysteine 107, histidine 109, cysteine 125, and histidine 128 each contribute to the [2Fe-2S] cluster site. Cysteine 112 and cysteine 127 form a disulfide bridge.

Belongs to the Rieske iron-sulfur protein family. The 4 large subunits of the cytochrome b6-f complex are cytochrome b6, subunit IV (17 kDa polypeptide, PetD), cytochrome f and the Rieske protein, while the 4 small subunits are PetG, PetL, PetM and PetN. The complex functions as a dimer. The cofactor is [2Fe-2S] cluster.

The protein localises to the cellular thylakoid membrane. It catalyses the reaction 2 oxidized [plastocyanin] + a plastoquinol + 2 H(+)(in) = 2 reduced [plastocyanin] + a plastoquinone + 4 H(+)(out). Its function is as follows. Component of the cytochrome b6-f complex, which mediates electron transfer between photosystem II (PSII) and photosystem I (PSI), cyclic electron flow around PSI, and state transitions. This is Cytochrome b6-f complex iron-sulfur subunit from Prochlorococcus marinus (strain MIT 9312).